Here is a 231-residue protein sequence, read N- to C-terminus: Probable methylthioribulose-1-phosphate dehydratase (231 aa).

Cysteine 90 contributes to the substrate binding site. Zn(2+)-binding residues include histidine 108 and histidine 110. The active-site Proton donor/acceptor is the glutamate 132. Histidine 188 is a binding site for Zn(2+).

Belongs to the aldolase class II family. MtnB subfamily. Zn(2+) serves as cofactor.

Its subcellular location is the cytoplasm. It carries out the reaction 5-(methylsulfanyl)-D-ribulose 1-phosphate = 5-methylsulfanyl-2,3-dioxopentyl phosphate + H2O. It functions in the pathway amino-acid biosynthesis; L-methionine biosynthesis via salvage pathway; L-methionine from S-methyl-5-thio-alpha-D-ribose 1-phosphate: step 2/6. Its function is as follows. Catalyzes the dehydration of methylthioribulose-1-phosphate (MTRu-1-P) into 2,3-diketo-5-methylthiopentyl-1-phosphate (DK-MTP-1-P). The chain is Probable methylthioribulose-1-phosphate dehydratase from Anopheles gambiae (African malaria mosquito).